We begin with the raw amino-acid sequence, 66 residues long: uncharacterized protein (66 aa).

2 consecutive transmembrane segments (helical) span residues 6–26 (KIIMILGAVLLIIGAVLHFVG) and 39–59 (VTFFFPVVTCIIISVVLSILL).

It is found in the cell membrane. This is an uncharacterized protein from Bacillus subtilis (strain 168).